The chain runs to 495 residues: Internal alternative NAD(P)H-ubiquinone oxidoreductase A1, mitochondrial (495 aa).

Residues 1–41 (MPWFKNLIKISKTITNQSSSYKSITPLASPLLAQFLQFTKQ) constitute a mitochondrion transit peptide. 61-91 (RIVVLGSGWAGCRLMKDIDTNIYDVVCVSPR) provides a ligand contact to FAD. An NAD(+)-binding site is contributed by 228–264 (LHCVVVGGGPTGVEFSGELSDFILKDVHQRYAHVKDY). A Microbody targeting signal motif is present at residues 486–495 (LVFGRDISRI).

This sequence belongs to the NADH dehydrogenase family. The cofactor is FAD.

It localises to the mitochondrion inner membrane. It is found in the peroxisome. The catalysed reaction is a quinone + NADH + H(+) = a quinol + NAD(+). It catalyses the reaction a ubiquinone + NADH + H(+) = a ubiquinol + NAD(+). Its function is as follows. Alternative NADH-ubiquinone oxidoreductase which catalyzes the oxidation of mitochondrial NADH does not translocate protons across the inner mitochondrial membrane. This chain is Internal alternative NAD(P)H-ubiquinone oxidoreductase A1, mitochondrial (NDA1), found in Solanum tuberosum (Potato).